A 265-amino-acid polypeptide reads, in one-letter code: tRNA pseudouridine synthase A (265 aa).

Aspartate 53 (nucleophile) is an active-site residue. Position 111 (tyrosine 111) interacts with substrate.

It belongs to the tRNA pseudouridine synthase TruA family. In terms of assembly, homodimer.

The catalysed reaction is uridine(38/39/40) in tRNA = pseudouridine(38/39/40) in tRNA. Functionally, formation of pseudouridine at positions 38, 39 and 40 in the anticodon stem and loop of transfer RNAs. The chain is tRNA pseudouridine synthase A from Acinetobacter baumannii (strain SDF).